The chain runs to 292 residues: Homoserine kinase (292 aa).

81 to 91 (RPRSGLGSSGA) contributes to the ATP binding site.

The protein belongs to the GHMP kinase family. Homoserine kinase subfamily.

Its subcellular location is the cytoplasm. The enzyme catalyses L-homoserine + ATP = O-phospho-L-homoserine + ADP + H(+). The protein operates within amino-acid biosynthesis; L-threonine biosynthesis; L-threonine from L-aspartate: step 4/5. Functionally, catalyzes the ATP-dependent phosphorylation of L-homoserine to L-homoserine phosphate. The chain is Homoserine kinase from Thermococcus gammatolerans (strain DSM 15229 / JCM 11827 / EJ3).